Consider the following 290-residue polypeptide: MEGTLLRRYGGFYYVESEGRVWTCRLRGRFRLQETVFLPGDRVEIKPVGPGEGVIEDLKPRRTCLKRPAVANVEQVIIVFALREPPPDLELLDRLLFLSGVEDIEAVIVWNKADISKQEYAGLPELYRQIGYRNLITSAHTGQGIDELKALLAGRLSTFAGPSGVGKSSLLNAIQPGLNLRTGEVSSKGGRGRHTTRQAELIRLPDGGWVADTPGFSRLDLPAITREEVAAYFPEMEPLRGRCRYASCLHRKEPGCAVVAAVEAGLIIKHRYEHYLTFLAEVIARERSFS.

Residues Arg-62–Leu-219 form the CP-type G domain. Residues Asn-111 to Asp-114 and Gly-161 to Ser-169 each bind GTP. Residues Cys-243, Cys-248, His-250, and Cys-256 each contribute to the Zn(2+) site.

The protein belongs to the TRAFAC class YlqF/YawG GTPase family. RsgA subfamily. Monomer. Associates with 30S ribosomal subunit, binds 16S rRNA. The cofactor is Zn(2+).

Its subcellular location is the cytoplasm. One of several proteins that assist in the late maturation steps of the functional core of the 30S ribosomal subunit. Helps release RbfA from mature subunits. May play a role in the assembly of ribosomal proteins into the subunit. Circularly permuted GTPase that catalyzes slow GTP hydrolysis, GTPase activity is stimulated by the 30S ribosomal subunit. The sequence is that of Small ribosomal subunit biogenesis GTPase RsgA from Moorella thermoacetica (strain ATCC 39073 / JCM 9320).